A 253-amino-acid chain; its full sequence is Phosphoadenosine 5'-phosphosulfate reductase (253 aa).

C239 functions as the Nucleophile; cysteine thiosulfonate intermediate in the catalytic mechanism.

This sequence belongs to the PAPS reductase family. CysH subfamily.

It localises to the cytoplasm. It catalyses the reaction [thioredoxin]-disulfide + sulfite + adenosine 3',5'-bisphosphate + 2 H(+) = [thioredoxin]-dithiol + 3'-phosphoadenylyl sulfate. Its pathway is sulfur metabolism; hydrogen sulfide biosynthesis; sulfite from sulfate: step 3/3. Its function is as follows. Catalyzes the formation of sulfite from phosphoadenosine 5'-phosphosulfate (PAPS) using thioredoxin as an electron donor. This chain is Phosphoadenosine 5'-phosphosulfate reductase, found in Aliivibrio salmonicida (strain LFI1238) (Vibrio salmonicida (strain LFI1238)).